The sequence spans 570 residues: MRLSQLLVPTLREIPAEAEIPSHILMLKAALMRKLASGVYIYLPLGQRVLRKVEQIVREEMDRAGSQEVLMSALIPAELLKESGRWDVFGPEMFKLKDRNERDFCLGPTHEEVFTDLIRNEVKSYRQLPLILYQIQTKFRDERRPRFGVMRSREFIMKDAYSFDVDWEGLDKSFNKMYEAYCRIFDRCGLKYLVVEADSGAMGGKDSKEFMVISSIGEAVIAYCDNCGYAANEEKAECLINQEIVEEMLPKEEVYTPNVRTIEELVNFLGITPNKFVKTLIYKAKDNVVAALVRGDRDLNETKLLNILGIREEELELADASIVEKVTGAKVGFAGPIGLKGEVMIIVDNEIPQMRNFIVGANETDYHIKNVNYGRDFKADVVADIKNVIEGDKCPRCGSPLKIDRGIEVGHIFKLGTKYSDALGAKYVDEEGNEKPIIMGCYGIGINRTVAAIIEQHHDEKGIIWPMSVAPYHVIIVPVNVSNEAQNRVAEDIYAALQKEGIEVLIDDRDLRAGVKFNDADLLGIPIRITVGKKVDDGIVEIKLRENEEAEEVKISDVVEKVKNIIKEKM.

This sequence belongs to the class-II aminoacyl-tRNA synthetase family. ProS type 1 subfamily. As to quaternary structure, homodimer.

The protein localises to the cytoplasm. The catalysed reaction is tRNA(Pro) + L-proline + ATP = L-prolyl-tRNA(Pro) + AMP + diphosphate. Functionally, catalyzes the attachment of proline to tRNA(Pro) in a two-step reaction: proline is first activated by ATP to form Pro-AMP and then transferred to the acceptor end of tRNA(Pro). As ProRS can inadvertently accommodate and process non-cognate amino acids such as alanine and cysteine, to avoid such errors it has two additional distinct editing activities against alanine. One activity is designated as 'pretransfer' editing and involves the tRNA(Pro)-independent hydrolysis of activated Ala-AMP. The other activity is designated 'posttransfer' editing and involves deacylation of mischarged Ala-tRNA(Pro). The misacylated Cys-tRNA(Pro) is not edited by ProRS. The sequence is that of Proline--tRNA ligase from Thermoanaerobacter sp. (strain X514).